A 118-amino-acid chain; its full sequence is Non-specific lipid-transfer protein 1 (118 aa).

Positions 1 to 20 (MARLAVAIAVVAAVVVVLAA) are cleaved as a signal peptide. 4 disulfide bridges follow: cysteine 29-cysteine 77, cysteine 39-cysteine 54, cysteine 55-cysteine 100, and cysteine 75-cysteine 114.

This sequence belongs to the plant LTP family.

Functionally, plant non-specific lipid-transfer proteins transfer phospholipids as well as galactolipids across membranes. May play a role in wax or cutin deposition in the cell walls of expanding epidermal cells and certain secretory tissues. The chain is Non-specific lipid-transfer protein 1 (LTP1) from Sorghum bicolor (Sorghum).